We begin with the raw amino-acid sequence, 275 residues long: Glutamate 5-kinase (275 aa).

Lys-17 serves as a coordination point for ATP. Substrate is bound by residues Ser-57, Asp-144, and Asn-160. ATP contacts are provided by residues 180-181 (SD) and 222-228 (TGGMLSK).

The protein belongs to the glutamate 5-kinase family.

The protein resides in the cytoplasm. The enzyme catalyses L-glutamate + ATP = L-glutamyl 5-phosphate + ADP. Its pathway is amino-acid biosynthesis; L-proline biosynthesis; L-glutamate 5-semialdehyde from L-glutamate: step 1/2. Catalyzes the transfer of a phosphate group to glutamate to form L-glutamate 5-phosphate. This chain is Glutamate 5-kinase, found in Streptococcus pyogenes serotype M12 (strain MGAS2096).